Consider the following 443-residue polypeptide: Xaa-Pro dipeptidase (443 aa).

Residues aspartate 246, aspartate 257, histidine 339, glutamate 384, and glutamate 423 each coordinate Mn(2+).

It belongs to the peptidase M24B family. Bacterial-type prolidase subfamily. Mn(2+) serves as cofactor.

It catalyses the reaction Xaa-L-Pro dipeptide + H2O = an L-alpha-amino acid + L-proline. Its function is as follows. Splits dipeptides with a prolyl residue in the C-terminal position. The polypeptide is Xaa-Pro dipeptidase (Shigella flexneri).